Here is a 129-residue protein sequence, read N- to C-terminus: Large ribosomal subunit protein bL17 (129 aa).

It belongs to the bacterial ribosomal protein bL17 family. In terms of assembly, part of the 50S ribosomal subunit. Contacts protein L32.

This Stutzerimonas stutzeri (strain A1501) (Pseudomonas stutzeri) protein is Large ribosomal subunit protein bL17.